We begin with the raw amino-acid sequence, 92 residues long: Small ribosomal subunit protein uS19 (92 aa).

The protein belongs to the universal ribosomal protein uS19 family.

Its function is as follows. Protein S19 forms a complex with S13 that binds strongly to the 16S ribosomal RNA. The sequence is that of Small ribosomal subunit protein uS19 from Acaryochloris marina (strain MBIC 11017).